The primary structure comprises 120 residues: Phosphoribosyl-AMP cyclohydrolase (120 aa).

Asp-75 lines the Mg(2+) pocket. Cys-76 contacts Zn(2+). The Mg(2+) site is built by Asp-77 and Asp-79. The Zn(2+) site is built by Cys-92 and Cys-99.

This sequence belongs to the PRA-CH family. In terms of assembly, homodimer. It depends on Mg(2+) as a cofactor. Zn(2+) is required as a cofactor.

It localises to the cytoplasm. The catalysed reaction is 1-(5-phospho-beta-D-ribosyl)-5'-AMP + H2O = 1-(5-phospho-beta-D-ribosyl)-5-[(5-phospho-beta-D-ribosylamino)methylideneamino]imidazole-4-carboxamide. It participates in amino-acid biosynthesis; L-histidine biosynthesis; L-histidine from 5-phospho-alpha-D-ribose 1-diphosphate: step 3/9. Its function is as follows. Catalyzes the hydrolysis of the adenine ring of phosphoribosyl-AMP. This Methanosarcina mazei (strain ATCC BAA-159 / DSM 3647 / Goe1 / Go1 / JCM 11833 / OCM 88) (Methanosarcina frisia) protein is Phosphoribosyl-AMP cyclohydrolase.